The following is a 301-amino-acid chain: GTPase Era (301 aa).

The Era-type G domain occupies 11–180 (RSGIITLVGR…KDVFFENCLN (170 aa)). The interval 19–26 (GRPNVGKS) is G1. 19–26 (GRPNVGKS) provides a ligand contact to GTP. The G2 stretch occupies residues 45-49 (QTTRR). Positions 66 to 69 (DTPG) are G3. GTP-binding positions include 66-70 (DTPGI) and 129-132 (TKID). The interval 129-132 (TKID) is G4. Positions 159–161 (VSA) are G5. In terms of domain architecture, KH type-2 spans 210–286 (LEQEIPHSLL…YLRLIVKVVK (77 aa)).

Belongs to the TRAFAC class TrmE-Era-EngA-EngB-Septin-like GTPase superfamily. Era GTPase family. Monomer.

The protein resides in the cytoplasm. It is found in the cell membrane. Functionally, an essential GTPase that binds both GDP and GTP, with rapid nucleotide exchange. Plays a role in 16S rRNA processing and 30S ribosomal subunit biogenesis and possibly also in cell cycle regulation and energy metabolism. This Tropheryma whipplei (strain TW08/27) (Whipple's bacillus) protein is GTPase Era.